A 430-amino-acid polypeptide reads, in one-letter code: MRVGIKVLGCPKNEADCEVLAGVLREGGHEIVFDVKDADVVVLDTCAFIEDAKRESIDEIFSFVDAKDQYGYKLVVKGCLVQRYYEELKKEVPEVDQWIGVADPEEIANAIENGTDLVPDQPETVYRYRKRIDLEERPYAYVKISDGCDRGCTFCSIPSFKGSLRSRSIEDITREVEDLLKEGKKEIILVAQDTTSYGIDLYRKQALPDLLRRLNSLNGEFWIRVMYLHPDHLTEEIISAMLELDKVVKYFDVPVQHGSDKILKLMGRTKSSEELKKMLSSIRERFPDAVLRTSIIVGFPGETEEDFEELKQFVEEIQFDKLGAFVYSDEEGTVAFNLKEKVDPEMAKRRQEELLLLQAEISNSRLDRFVGKKLKFLVEGKEGKFLVGRTWTEAPEVDGVVFVRGKGKIGDFLEVVIKEHDEYDMWGSVI.

Residues 1-116 (MRVGIKVLGC…IANAIENGTD (116 aa)) enclose the MTTase N-terminal domain. Positions 10, 46, 79, 148, 152, and 155 each coordinate [4Fe-4S] cluster. The 232-residue stretch at 134 to 365 (LEERPYAYVK…LLQAEISNSR (232 aa)) folds into the Radical SAM core domain. Positions 367–430 (DRFVGKKLKF…DEYDMWGSVI (64 aa)) constitute a TRAM domain.

This sequence belongs to the methylthiotransferase family. RimO subfamily. It depends on [4Fe-4S] cluster as a cofactor.

It localises to the cytoplasm. It catalyses the reaction L-aspartate(89)-[ribosomal protein uS12]-hydrogen + (sulfur carrier)-SH + AH2 + 2 S-adenosyl-L-methionine = 3-methylsulfanyl-L-aspartate(89)-[ribosomal protein uS12]-hydrogen + (sulfur carrier)-H + 5'-deoxyadenosine + L-methionine + A + S-adenosyl-L-homocysteine + 2 H(+). Functionally, catalyzes the methylthiolation of an aspartic acid residue of ribosomal protein uS12. The protein is Ribosomal protein uS12 methylthiotransferase RimO of Thermotoga petrophila (strain ATCC BAA-488 / DSM 13995 / JCM 10881 / RKU-1).